A 435-amino-acid polypeptide reads, in one-letter code: Glutamyl-tRNA reductase (435 aa).

Residues 49–52, Ser-118, 123–125, and Gln-129 contribute to the substrate site; these read TCNR and EPQ. Catalysis depends on Cys-50, which acts as the Nucleophile. 203–208 provides a ligand contact to NADP(+); the sequence is GAGETI.

This sequence belongs to the glutamyl-tRNA reductase family. In terms of assembly, homodimer.

It carries out the reaction (S)-4-amino-5-oxopentanoate + tRNA(Glu) + NADP(+) = L-glutamyl-tRNA(Glu) + NADPH + H(+). It functions in the pathway porphyrin-containing compound metabolism; protoporphyrin-IX biosynthesis; 5-aminolevulinate from L-glutamyl-tRNA(Glu): step 1/2. Its function is as follows. Catalyzes the NADPH-dependent reduction of glutamyl-tRNA(Glu) to glutamate 1-semialdehyde (GSA). The polypeptide is Glutamyl-tRNA reductase (Glaesserella parasuis serovar 5 (strain SH0165) (Haemophilus parasuis)).